Consider the following 264-residue polypeptide: MNQVTESAVQFDVVTLFPEMFRALTDWGITSRAVKQGRFGLRTWNPRDFTTDNYRTVDDRPYGGGPGMVMLARPLEAAIDAAKAAQAEQGIASTRVVMMSPQGAPLTHDRAVRMAQEPGVVVLCGRYEAIDQRLLDRCVDEEISLGDFVLSGGELPAMAMMDAVVRLLPGVLNDSLSAVQDSFADGLLDCPHYTRPEEYDGVRVPDVLLGGHHAEIEKWRRQEALRNTLRKRPDLIVRARREKLLSRADEAWLANLAREAKDAS.

S-adenosyl-L-methionine contacts are provided by residues G125 and L145–L150.

The protein belongs to the RNA methyltransferase TrmD family. Homodimer.

The protein localises to the cytoplasm. The enzyme catalyses guanosine(37) in tRNA + S-adenosyl-L-methionine = N(1)-methylguanosine(37) in tRNA + S-adenosyl-L-homocysteine + H(+). Functionally, specifically methylates guanosine-37 in various tRNAs. This Burkholderia cenocepacia (strain HI2424) protein is tRNA (guanine-N(1)-)-methyltransferase.